The following is a 269-amino-acid chain: Formamidopyrimidine-DNA glycosylase (269 aa).

Pro2 (schiff-base intermediate with DNA) is an active-site residue. Glu3 serves as the catalytic Proton donor. Lys57 serves as the catalytic Proton donor; for beta-elimination activity. His90, Arg109, and Lys150 together coordinate DNA. An FPG-type zinc finger spans residues 235-269; it reads QVYGRKGEPCRVCGTPIVASKHAQRATFYCRQCQK. Arg259 serves as the catalytic Proton donor; for delta-elimination activity.

This sequence belongs to the FPG family. In terms of assembly, monomer. Zn(2+) is required as a cofactor.

The enzyme catalyses Hydrolysis of DNA containing ring-opened 7-methylguanine residues, releasing 2,6-diamino-4-hydroxy-5-(N-methyl)formamidopyrimidine.. The catalysed reaction is 2'-deoxyribonucleotide-(2'-deoxyribose 5'-phosphate)-2'-deoxyribonucleotide-DNA = a 3'-end 2'-deoxyribonucleotide-(2,3-dehydro-2,3-deoxyribose 5'-phosphate)-DNA + a 5'-end 5'-phospho-2'-deoxyribonucleoside-DNA + H(+). In terms of biological role, involved in base excision repair of DNA damaged by oxidation or by mutagenic agents. Acts as a DNA glycosylase that recognizes and removes damaged bases. Has a preference for oxidized purines, such as 7,8-dihydro-8-oxoguanine (8-oxoG). Has AP (apurinic/apyrimidinic) lyase activity and introduces nicks in the DNA strand. Cleaves the DNA backbone by beta-delta elimination to generate a single-strand break at the site of the removed base with both 3'- and 5'-phosphates. This Enterobacter sp. (strain 638) protein is Formamidopyrimidine-DNA glycosylase.